Here is an 836-residue protein sequence, read N- to C-terminus: MGIQGLLPQLKSIMAPIGVEALKGQTVAVDTYSWLHKGALSCGDRLCKGLPTTRHIEYCMHRVNMLRHHGVKPILVFDGGHLPMKGDQETKRERSRKENLERAKEHESAGNSRAAFECYQKAVDITPRIAFELIQVLKQEKVDYIVAPYEADAQMTFLSVNKLVDAVITEDSDLIPFGCSRIIFKMDKFGQGVEFHITRLQRCRELDLNGFTMQMLLEMCILSGCDYLPSLPGMGVKRAHALIQKLKGHEKVIKHLRYSAVSVPPQYEENFRKAIWAFQFQRVYDPVTEDIVHLSGIPHGSSEDLDFLGPWLPQTVAKGIAQGNIDPITKEPFEGKTESSALAFDKVHLNRESSAPSNGKKKLDLPVQRNVLTNYFCLASLEAKRKFRAPKVTPKQQVLNGSLPSPRIEDSGTPDLIEDTSLPSNNIQVYQCSSEHFSSGTPLDDSINTASQCSSERVRCDIPRDDSASVSPQCSHDIGSDPAEDPDIEGNKVKVNFCNRSTIPTGSFLEGTLPGISDPFLDSHNTEPSRAAPRYAEKSNVVSANRNITVRSSYFKTVNKRVCTNQGEDECHDEDNCETGNYTLPGDQQRSSGGILKRRKFSDPQNFEDGMFQPTSPHESPPVADKGCDSDSHDGINTNSEGKFGCNVAHVNKYSGIAEKSMDKFAALISSFRYAGSRASGLRAPLKDVKNTLPVRSVLRPPEQRFGCTAKKTTRVPLQSRFSSDATNSTDVPDLSTFAYRPTTASAHSDQGKITSKATDAAAGPPDLRTFAYAPTRSTTSRFDQSENTRKAMCTADSPPDISTFEYKPMKSAVRRSDGSKFSGAALKAARRTSRS.

The segment at 1 to 99 is N-domain; sequence MGIQGLLPQL…TKRERSRKEN (99 aa). 2 residues coordinate Mg(2+): Asp30 and Asp78. The interval 82–108 is disordered; the sequence is LPMKGDQETKRERSRKENLERAKEHES. A compositionally biased stretch (basic and acidic residues) spans 84–108; the sequence is MKGDQETKRERSRKENLERAKEHES. The tract at residues 138–230 is I-domain; the sequence is KQEKVDYIVA…ILSGCDYLPS (93 aa). The Mg(2+) site is built by Glu150, Asp152, Asp171, Asp173, and Asp226. Disordered regions lie at residues 464–488, 568–641, and 744–836; these read RDDS…DPDI, EDEC…TNSE, and TASA…TSRS. Acidic residues predominate over residues 568 to 577; that stretch reads EDECHDEDNC. 2 stretches are compositionally biased toward polar residues: residues 578–592 and 744–758; these read ETGN…QRSS and TASA…TSKA.

This sequence belongs to the XPG/RAD2 endonuclease family. EXO1 subfamily. The cofactor is Mg(2+).

It is found in the nucleus. Functionally, putative 5'-&gt;3' double-stranded DNA exonuclease which may also contain a cryptic 3'-&gt;5' double-stranded DNA exonuclease activity. May be involved in DNA mismatch repair (MMR). The protein is Exonuclease 1 (EXO1) of Oryza sativa subsp. japonica (Rice).